Here is a 118-residue protein sequence, read N- to C-terminus: Large ribosomal subunit protein bL20 (118 aa).

Belongs to the bacterial ribosomal protein bL20 family.

In terms of biological role, binds directly to 23S ribosomal RNA and is necessary for the in vitro assembly process of the 50S ribosomal subunit. It is not involved in the protein synthesizing functions of that subunit. The protein is Large ribosomal subunit protein bL20 of Pseudoalteromonas atlantica (strain T6c / ATCC BAA-1087).